The chain runs to 227 residues: Small ribosomal subunit protein uS3 (227 aa).

The KH type-2 domain maps to 39-107 (VREFLDKRLV…PVHINIEEVR (69 aa)).

This sequence belongs to the universal ribosomal protein uS3 family. Part of the 30S ribosomal subunit. Forms a tight complex with proteins S10 and S14.

In terms of biological role, binds the lower part of the 30S subunit head. Binds mRNA in the 70S ribosome, positioning it for translation. The chain is Small ribosomal subunit protein uS3 from Marinobacter nauticus (strain ATCC 700491 / DSM 11845 / VT8) (Marinobacter aquaeolei).